Consider the following 113-residue polypeptide: Putative pterin-4-alpha-carbinolamine dehydratase (113 aa).

This sequence belongs to the pterin-4-alpha-carbinolamine dehydratase family.

It carries out the reaction (4aS,6R)-4a-hydroxy-L-erythro-5,6,7,8-tetrahydrobiopterin = (6R)-L-erythro-6,7-dihydrobiopterin + H2O. The sequence is that of Putative pterin-4-alpha-carbinolamine dehydratase from Pelodictyon phaeoclathratiforme (strain DSM 5477 / BU-1).